Here is a 607-residue protein sequence, read N- to C-terminus: Translation initiation factor IF-2 (607 aa).

A disordered region spans residues 54–93; sequence SAPQAQDSTPVAETPAAAQPAAPQAASSQPAAAQAAQAVA. The segment covering 62 to 93 has biased composition (low complexity); the sequence is TPVAETPAAAQPAAPQAASSQPAAAQAAQAVA. The 174-residue stretch at 108–281 folds into the tr-type G domain; that stretch reads HRAPVVTIMG…ELEDLRADPK (174 aa). Positions 117–124 are G1; that stretch reads GHVDHGKT. GTP is bound at residue 117 to 124; the sequence is GHVDHGKT. The interval 142–146 is G2; it reads GITQH. The G3 stretch occupies residues 163-166; the sequence is DTPG. Residues 163–167 and 217–220 each bind GTP; these read DTPGH and NKVD. Positions 217-220 are G4; the sequence is NKVD. Positions 253–255 are G5; it reads SAK.

It belongs to the TRAFAC class translation factor GTPase superfamily. Classic translation factor GTPase family. IF-2 subfamily.

The protein localises to the cytoplasm. One of the essential components for the initiation of protein synthesis. Protects formylmethionyl-tRNA from spontaneous hydrolysis and promotes its binding to the 30S ribosomal subunits. Also involved in the hydrolysis of GTP during the formation of the 70S ribosomal complex. The polypeptide is Translation initiation factor IF-2 (Deinococcus deserti (strain DSM 17065 / CIP 109153 / LMG 22923 / VCD115)).